Here is a 160-residue protein sequence, read N- to C-terminus: MSRRRRVVRRAVATEGCSGNVLLARFVNVVMHQGKKALAEKIVFGALKMAESRLQGESGIAIFNTAVANVMPKMEVRSRRVGGVTYQIPVEVREDRSTSLALRWIVKAARASRKRTNKTYMSCLCHELMEAYNKRGGACKIKEEKYRMAEANKAFSHFRF.

Belongs to the universal ribosomal protein uS7 family. As to quaternary structure, part of the 30S ribosomal subunit. Contacts proteins S9 and S11.

In terms of biological role, one of the primary rRNA binding proteins, it binds directly to 16S rRNA where it nucleates assembly of the head domain of the 30S subunit. Is located at the subunit interface close to the decoding center, probably blocks exit of the E-site tRNA. The sequence is that of Small ribosomal subunit protein uS7 from Anaplasma phagocytophilum (strain HZ).